We begin with the raw amino-acid sequence, 417 residues long: Glutamyl-tRNA reductase (417 aa).

Residues 49–52 (TCNR), serine 105, 110–112 (EPQ), and glutamine 116 contribute to the substrate site. The active-site Nucleophile is the cysteine 50. Residue 185-190 (GAGEMI) participates in NADP(+) binding.

It belongs to the glutamyl-tRNA reductase family. As to quaternary structure, homodimer.

It catalyses the reaction (S)-4-amino-5-oxopentanoate + tRNA(Glu) + NADP(+) = L-glutamyl-tRNA(Glu) + NADPH + H(+). It functions in the pathway porphyrin-containing compound metabolism; protoporphyrin-IX biosynthesis; 5-aminolevulinate from L-glutamyl-tRNA(Glu): step 1/2. Its function is as follows. Catalyzes the NADPH-dependent reduction of glutamyl-tRNA(Glu) to glutamate 1-semialdehyde (GSA). The sequence is that of Glutamyl-tRNA reductase from Azoarcus sp. (strain BH72).